Consider the following 357-residue polypeptide: Peptide chain release factor 1 (357 aa).

At Gln-234 the chain carries N5-methylglutamine.

This sequence belongs to the prokaryotic/mitochondrial release factor family. Post-translationally, methylated by PrmC. Methylation increases the termination efficiency of RF1.

It is found in the cytoplasm. In terms of biological role, peptide chain release factor 1 directs the termination of translation in response to the peptide chain termination codons UAG and UAA. The protein is Peptide chain release factor 1 (prfA) of Lactococcus lactis subsp. lactis (strain IL1403) (Streptococcus lactis).